A 140-amino-acid chain; its full sequence is Putative pre-16S rRNA nuclease (140 aa).

The protein belongs to the YqgF nuclease family.

The protein resides in the cytoplasm. Functionally, could be a nuclease involved in processing of the 5'-end of pre-16S rRNA. The protein is Putative pre-16S rRNA nuclease of Vibrio cholerae serotype O1 (strain ATCC 39541 / Classical Ogawa 395 / O395).